The sequence spans 315 residues: Probable phosphate transport system permease protein PstC (315 aa).

A run of 6 helical transmembrane segments spans residues 18-38 (IITL…LGFY), 80-100 (IYTA…YAIF), 119-139 (IMAG…LVPL), 167-187 (CYLS…AAII), 227-247 (GLIL…LVIG), and 283-303 (VLYS…IIGI). An ABC transmembrane type-1 domain is found at 76 to 302 (IWGSIYTATI…VIGLVVNIIG (227 aa)).

The protein belongs to the binding-protein-dependent transport system permease family. CysTW subfamily.

It localises to the cell membrane. In terms of biological role, part of the binding-protein-dependent transport system for phosphate; probably responsible for the translocation of the substrate across the membrane. The sequence is that of Probable phosphate transport system permease protein PstC (pstC) from Methanocaldococcus jannaschii (strain ATCC 43067 / DSM 2661 / JAL-1 / JCM 10045 / NBRC 100440) (Methanococcus jannaschii).